The primary structure comprises 189 residues: Crossover junction endodeoxyribonuclease RuvC (189 aa).

Residues Asp-7, Glu-68, and Asp-141 contribute to the active site. Residues Asp-7, Glu-68, and Asp-141 each contribute to the Mg(2+) site.

Belongs to the RuvC family. Homodimer which binds Holliday junction (HJ) DNA. The HJ becomes 2-fold symmetrical on binding to RuvC with unstacked arms; it has a different conformation from HJ DNA in complex with RuvA. In the full resolvosome a probable DNA-RuvA(4)-RuvB(12)-RuvC(2) complex forms which resolves the HJ. Mg(2+) is required as a cofactor.

The protein localises to the cytoplasm. The enzyme catalyses Endonucleolytic cleavage at a junction such as a reciprocal single-stranded crossover between two homologous DNA duplexes (Holliday junction).. Its function is as follows. The RuvA-RuvB-RuvC complex processes Holliday junction (HJ) DNA during genetic recombination and DNA repair. Endonuclease that resolves HJ intermediates. Cleaves cruciform DNA by making single-stranded nicks across the HJ at symmetrical positions within the homologous arms, yielding a 5'-phosphate and a 3'-hydroxyl group; requires a central core of homology in the junction. The consensus cleavage sequence is 5'-(A/T)TT(C/G)-3'. Cleavage occurs on the 3'-side of the TT dinucleotide at the point of strand exchange. HJ branch migration catalyzed by RuvA-RuvB allows RuvC to scan DNA until it finds its consensus sequence, where it cleaves and resolves the cruciform DNA. The protein is Crossover junction endodeoxyribonuclease RuvC of Nocardia farcinica (strain IFM 10152).